Here is a 308-residue protein sequence, read N- to C-terminus: MLTFQQIILKLQSYWADQGCALLQPYDMEVGAGTSHTATFLRALGPEPWKAAYVQPSRRPKDGRYGENPNRLQHYYQYQVVLKPAPANILELYLGSLEALGFDLKKNDIRFVEDDWENPTLGAWGLGWEVWLNGMEVTQFTYFQQVGGIDCKPATGEITYGLERLAMYLQGVDNVYNLTWTDGLTYGDVYKQNEVEQSTYNFEHSDTDFLFTAFSAHEKQAKHLVEQQLALPAYEQVLKAGHSFNLLDARGAISVTERAAYIGRIRNLARAVAQSYYESRERLGFPLAPREWVEQMTKTSKTTTKKGA.

The protein belongs to the class-II aminoacyl-tRNA synthetase family. In terms of assembly, tetramer of two alpha and two beta subunits.

Its subcellular location is the cytoplasm. The catalysed reaction is tRNA(Gly) + glycine + ATP = glycyl-tRNA(Gly) + AMP + diphosphate. The polypeptide is Glycine--tRNA ligase alpha subunit (Polaromonas naphthalenivorans (strain CJ2)).